A 306-amino-acid chain; its full sequence is Pantothenate synthetase (306 aa).

ATP is bound at residue 37-44; that stretch reads MGALHEGH. Residue H44 is the Proton donor of the active site. Residue Q69 coordinates (R)-pantoate. Q69 lines the beta-alanine pocket. 155–158 contributes to the ATP binding site; sequence GEKD. Q161 lines the (R)-pantoate pocket. Residues V184 and 192 to 195 each bind ATP; that span reads KSSR.

It belongs to the pantothenate synthetase family. As to quaternary structure, homodimer.

It is found in the cytoplasm. It carries out the reaction (R)-pantoate + beta-alanine + ATP = (R)-pantothenate + AMP + diphosphate + H(+). It functions in the pathway cofactor biosynthesis; (R)-pantothenate biosynthesis; (R)-pantothenate from (R)-pantoate and beta-alanine: step 1/1. Catalyzes the condensation of pantoate with beta-alanine in an ATP-dependent reaction via a pantoyl-adenylate intermediate. The chain is Pantothenate synthetase from Corynebacterium jeikeium (strain K411).